Reading from the N-terminus, the 278-residue chain is Glycerophosphodiester phosphodiesterase GpdQ (278 aa).

Fe cation is bound by residues Asp8, His10, Asp50, Asn80, His156, His195, and His197.

Belongs to the cyclic nucleotide phosphodiesterase class-III family. The cofactor is Fe(2+).

The catalysed reaction is a sn-glycero-3-phosphodiester + H2O = an alcohol + sn-glycerol 3-phosphate + H(+). It carries out the reaction sn-glycero-3-phosphoethanolamine + H2O = ethanolamine + sn-glycerol 3-phosphate + H(+). Catalyzes the hydrolysis of the 3'-5' phosphodiester bond of glycerophosphodiesters such as glycerophosphorylethanolamine (GPE), a typical phospholipid metabolite. This is Glycerophosphodiester phosphodiesterase GpdQ from Enterobacter lignolyticus (strain SCF1).